Reading from the N-terminus, the 205-residue chain is Holliday junction branch migration complex subunit RuvA (205 aa).

Residues 1-64 are domain I; sequence MIGRLRGLLV…EDAQLLYGFI (64 aa). Residues 65–143 form a domain II region; the sequence is TKQERALFRL…SLMEASAGSE (79 aa). Positions 144 to 156 are flexible linker; it reads REFMLKSNYTPAP. A domain III region spans residues 157-205; that stretch reads VINTAEEDAIAALLSLGYKPAQASKAVSAVYQDGMDSETLIKSSLKSML.

The protein belongs to the RuvA family. Homotetramer. Forms an RuvA(8)-RuvB(12)-Holliday junction (HJ) complex. HJ DNA is sandwiched between 2 RuvA tetramers; dsDNA enters through RuvA and exits via RuvB. An RuvB hexamer assembles on each DNA strand where it exits the tetramer. Each RuvB hexamer is contacted by two RuvA subunits (via domain III) on 2 adjacent RuvB subunits; this complex drives branch migration. In the full resolvosome a probable DNA-RuvA(4)-RuvB(12)-RuvC(2) complex forms which resolves the HJ.

The protein resides in the cytoplasm. Its function is as follows. The RuvA-RuvB-RuvC complex processes Holliday junction (HJ) DNA during genetic recombination and DNA repair, while the RuvA-RuvB complex plays an important role in the rescue of blocked DNA replication forks via replication fork reversal (RFR). RuvA specifically binds to HJ cruciform DNA, conferring on it an open structure. The RuvB hexamer acts as an ATP-dependent pump, pulling dsDNA into and through the RuvAB complex. HJ branch migration allows RuvC to scan DNA until it finds its consensus sequence, where it cleaves and resolves the cruciform DNA. The chain is Holliday junction branch migration complex subunit RuvA from Shewanella sediminis (strain HAW-EB3).